Consider the following 334-residue polypeptide: Porphobilinogen deaminase (334 aa).

Cys258 bears the S-(dipyrrolylmethanemethyl)cysteine mark.

Belongs to the HMBS family. In terms of assembly, monomer. Requires dipyrromethane as cofactor.

It catalyses the reaction 4 porphobilinogen + H2O = hydroxymethylbilane + 4 NH4(+). It participates in porphyrin-containing compound metabolism; protoporphyrin-IX biosynthesis; coproporphyrinogen-III from 5-aminolevulinate: step 2/4. Functionally, tetrapolymerization of the monopyrrole PBG into the hydroxymethylbilane pre-uroporphyrinogen in several discrete steps. In Ralstonia nicotianae (strain ATCC BAA-1114 / GMI1000) (Ralstonia solanacearum), this protein is Porphobilinogen deaminase.